An 880-amino-acid chain; its full sequence is Replication origin-binding protein (880 aa).

Residues 60 to 225 (PLPIRTKPVL…AELRGAENVH (166 aa)) form the Helicase ATP-binding domain. 73–80 (APMGSGKT) contacts ATP. The segment at 260–287 (PPAGDESREASASQPPPHDSSNEPCAPE) is disordered.

Belongs to the herpesviridae OriBP family. Homodimer. Interacts with the major DNA-binding protein. Interacts with the DNA helicase/primase complex-associated protein and the polymerase accessory protein.

The protein resides in the host nucleus. Its function is as follows. Functions as a docking protein to recruit essential components of the viral replication machinery to viral DNA origins. In the presence of the major DNA-binding protein, opens dsDNA leading to a conformational change in the origin that facilitates DNA unwinding and subsequent replication. The sequence is that of Replication origin-binding protein (UL9) from Psittacid herpesvirus 1 (isolate Amazon parrot/-/97-0001/1997) (PsHV-1).